Reading from the N-terminus, the 326-residue chain is MKNIAIIGASGYTGAQLTALVHAESELSIQGLYVSENSLDKGRALADLYPVYSHIELTLSPLTEEAKANIVAEADAVVLATEHSVSLHLAAWFYSQGLAVFDLSGAYRFSDVAQYPKWYGFEHEYPEVLAKAVYGLAEWNAKDVAATKMIAVPGCYPTASLTALKPLKNLLTSAYPVINAVSGVTGAGRKAQLHTSFCEVSLTPYGVLGHRHQPEIATQLGQEVIFTPHLGNFKRGILATITVQLKPGTTTADVAAAYSVYDQAPLVTVKQNQFPKVDDVVLTPNCHLGWKFDESSGYLVVASAIDNLMKGAASQALQCIKIHFNL.

Cys155 is a catalytic residue.

This sequence belongs to the NAGSA dehydrogenase family. Type 1 subfamily.

The protein localises to the cytoplasm. The catalysed reaction is N-acetyl-L-glutamate 5-semialdehyde + phosphate + NADP(+) = N-acetyl-L-glutamyl 5-phosphate + NADPH + H(+). Its pathway is amino-acid biosynthesis; L-arginine biosynthesis; N(2)-acetyl-L-ornithine from L-glutamate: step 3/4. Functionally, catalyzes the NADPH-dependent reduction of N-acetyl-5-glutamyl phosphate to yield N-acetyl-L-glutamate 5-semialdehyde. This chain is N-acetyl-gamma-glutamyl-phosphate reductase, found in Shewanella oneidensis (strain ATCC 700550 / JCM 31522 / CIP 106686 / LMG 19005 / NCIMB 14063 / MR-1).